Here is a 494-residue protein sequence, read N- to C-terminus: Alpha-amylase 1 (494 aa).

The signal sequence occupies residues 1–18 (MFLAKSIVCLALLAVANA). A disulfide bridge connects residues Cys46 and Cys102. Ca(2+)-binding residues include Asn116, Arg165, and Asp174. A disulfide bridge links Cys153 with Cys167. Arg202 is a binding site for chloride. Residue Asp204 is the Nucleophile of the active site. His208 is a Ca(2+) binding site. Glu241 functions as the Proton donor in the catalytic mechanism. Asn304 and Arg343 together coordinate chloride. The tract at residues 350-370 (FTDTDQGPPTTDGQNIASPSF) is disordered. Residues 351–363 (TDTDQGPPTTDGQ) show a composition bias toward low complexity. Cystine bridges form between Cys376–Cys382 and Cys448–Cys460.

It belongs to the glycosyl hydrolase 13 family. Monomer. Ca(2+) serves as cofactor. The cofactor is chloride.

It carries out the reaction Endohydrolysis of (1-&gt;4)-alpha-D-glucosidic linkages in polysaccharides containing three or more (1-&gt;4)-alpha-linked D-glucose units.. In Drosophila ananassae (Fruit fly), this protein is Alpha-amylase 1 (Amy35).